We begin with the raw amino-acid sequence, 453 residues long: Glutamyl-tRNA(Gln) amidotransferase subunit A (453 aa).

Catalysis depends on charge relay system residues Lys-53 and Ser-128. The active-site Acyl-ester intermediate is the Ser-152.

Belongs to the amidase family. GatA subfamily. As to quaternary structure, heterotrimer of A, B and C subunits.

The enzyme catalyses L-glutamyl-tRNA(Gln) + L-glutamine + ATP + H2O = L-glutaminyl-tRNA(Gln) + L-glutamate + ADP + phosphate + H(+). Functionally, allows the formation of correctly charged Gln-tRNA(Gln) through the transamidation of misacylated Glu-tRNA(Gln) in organisms which lack glutaminyl-tRNA synthetase. The reaction takes place in the presence of glutamine and ATP through an activated gamma-phospho-Glu-tRNA(Gln). This chain is Glutamyl-tRNA(Gln) amidotransferase subunit A, found in Helicobacter pylori (strain P12).